Here is a 241-residue protein sequence, read N- to C-terminus: Small ribosomal subunit protein uS3 (241 aa).

One can recognise a KH type-2 domain in the interval 39 to 108; the sequence is IREGVLKLLK…NLKVEVKVIE (70 aa). Positions 215 to 241 are disordered; that stretch reads SQRVSEKAPMNNDRRFNNKNNNRGGRK. A compositionally biased stretch (low complexity) spans 232–241; that stretch reads NKNNNRGGRK.

It belongs to the universal ribosomal protein uS3 family. As to quaternary structure, part of the 30S ribosomal subunit. Forms a tight complex with proteins S10 and S14.

Functionally, binds the lower part of the 30S subunit head. Binds mRNA in the 70S ribosome, positioning it for translation. The protein is Small ribosomal subunit protein uS3 of Mesoplasma florum (strain ATCC 33453 / NBRC 100688 / NCTC 11704 / L1) (Acholeplasma florum).